We begin with the raw amino-acid sequence, 405 residues long: Ubiquitin-like modifier-activating enzyme 5 (405 aa).

The interval 1 to 44 (MATVEELQTRVKQLEEELERERTRNRGGTDGGGGRKKIDQMSSE) is disordered. A compositionally biased stretch (basic and acidic residues) spans 7–24 (LQTRVKQLEEELERERTR). Residues G81, D102, K125, N148, and N182 each coordinate ATP. C224 and C227 together coordinate Zn(2+). The active-site Glycyl thioester intermediate is the C248. Zn(2+) is bound by residues C301 and C306. The segment at 346–377 (AETTEEELKAASHGHVPELVEGVHVAYVRPMT) is linker. The short motif at 390 to 405 (DDQESLEDLMAKMKSI) is the UFC1-binding sequence (UFC) element.

It belongs to the ubiquitin-activating E1 family. UBA5 subfamily. Homodimer; homodimerization is required for UFM1 activation. Interacts (via UIS motif) with UFM1; binds UFM1 via a trans-binding mechanism in which UFM1 interacts with distinct sites in both subunits of the UBA5 homodimer. Interacts (via C-terminus) with UFC1.

The protein resides in the cytoplasm. It is found in the nucleus. Its subcellular location is the endoplasmic reticulum membrane. The protein localises to the golgi apparatus. E1-like enzyme which specifically catalyzes the first step in ufmylation. Activates UFM1 by first adenylating its C-terminal glycine residue with ATP, and thereafter linking this residue to the side chain of a cysteine residue in E1, yielding a UFM1-E1 thioester and free AMP. Activates UFM1 via a trans-binding mechanism, in which UFM1 interacts with distinct sites in both subunits of the UBA5 homodimer. Trans-binding also promotes stabilization of the UBA5 homodimer, and enhances ATP-binding. Transfer of UFM1 from UBA5 to the E2-like enzyme UFC1 also takes place using a trans mechanism. This is Ubiquitin-like modifier-activating enzyme 5 from Branchiostoma floridae (Florida lancelet).